We begin with the raw amino-acid sequence, 417 residues long: NADH-quinone oxidoreductase subunit D (417 aa).

The protein belongs to the complex I 49 kDa subunit family. As to quaternary structure, NDH-1 is composed of 14 different subunits. Subunits NuoB, C, D, E, F, and G constitute the peripheral sector of the complex.

The protein resides in the cell inner membrane. It catalyses the reaction a quinone + NADH + 5 H(+)(in) = a quinol + NAD(+) + 4 H(+)(out). In terms of biological role, NDH-1 shuttles electrons from NADH, via FMN and iron-sulfur (Fe-S) centers, to quinones in the respiratory chain. The immediate electron acceptor for the enzyme in this species is believed to be ubiquinone. Couples the redox reaction to proton translocation (for every two electrons transferred, four hydrogen ions are translocated across the cytoplasmic membrane), and thus conserves the redox energy in a proton gradient. The sequence is that of NADH-quinone oxidoreductase subunit D from Methylobacillus flagellatus (strain ATCC 51484 / DSM 6875 / VKM B-1610 / KT).